Consider the following 278-residue polypeptide: Large ribosomal subunit protein uL2 (278 aa).

2 disordered regions span residues 1–20 and 225–278; these read MGIR…SVSD and VMNP…GKKR. Positions 258 to 278 are enriched in basic residues; it reads RNKKKASSRLIVRRRKSGKKR.

It belongs to the universal ribosomal protein uL2 family. In terms of assembly, part of the 50S ribosomal subunit. Forms a bridge to the 30S subunit in the 70S ribosome.

In terms of biological role, one of the primary rRNA binding proteins. Required for association of the 30S and 50S subunits to form the 70S ribosome, for tRNA binding and peptide bond formation. It has been suggested to have peptidyltransferase activity; this is somewhat controversial. Makes several contacts with the 16S rRNA in the 70S ribosome. This chain is Large ribosomal subunit protein uL2, found in Cutibacterium acnes (strain DSM 16379 / KPA171202) (Propionibacterium acnes).